The primary structure comprises 545 residues: MNEAKTLVIRGNLVDIINRRTFGAEISILNGHIGKVIPTGQDEGSYLLPGFIDAHVHIESSMVTPAAFIHAAVRHGSIGAVADPHEIANVMGTEGVEYMLDNAKGIPFYTWFGVPSCVPATIMETSGAIIDADETARLLEREDLHFLAEMMNYPGVLNKDPEVMRKIEAAKNAGKPIDGHYPLATGPKLKAYIESGISTDHETIYLEKGREKCELGMHVLIREGSAAKNFDALHPLLKEYPEQIMFCTDDAHPSFLNKGHINRMVKKSLDLGYDLYDVLRAASYNPAMHYKIPAGFLREGDSADFIQVNNLKNLTIQATYIQGTCVYDGEKCTLPFHKPILRNNFHTKPIPLEKLAVKAKGKQMRVIVCEDRELITKEELYPVHTFDGFVESDTERDILKLVILNRYQTAPPAIAFIKGTGLKLGAIAQSISHDSHNIIAIGVTDFELMQAINVVIKAKGGIAVSCMDEVTLLPLPVAGLMSDESLEETSRRYEEIEEKIKRLKSPMDSLQMTLSFMGLLAIPSLKLSNKGLFNSETFQFTSLFV.

It belongs to the metallo-dependent hydrolases superfamily. Adenine deaminase family. The cofactor is Mn(2+).

The catalysed reaction is adenine + H2O + H(+) = hypoxanthine + NH4(+). The protein is Adenine deaminase of Parabacteroides distasonis (strain ATCC 8503 / DSM 20701 / CIP 104284 / JCM 5825 / NCTC 11152).